Consider the following 323-residue polypeptide: ATP synthase gamma chain (323 aa).

It belongs to the ATPase gamma chain family. As to quaternary structure, F-type ATPases have 2 components, CF(1) - the catalytic core - and CF(0) - the membrane proton channel. CF(1) has five subunits: alpha(3), beta(3), gamma(1), delta(1), epsilon(1). CF(0) has three main subunits: a, b and c.

The protein localises to the cell inner membrane. In terms of biological role, produces ATP from ADP in the presence of a proton gradient across the membrane. The gamma chain is believed to be important in regulating ATPase activity and the flow of protons through the CF(0) complex. The chain is ATP synthase gamma chain from Rickettsia rickettsii (strain Iowa).